A 343-amino-acid chain; its full sequence is Major histocompatibility complex class I-related protein 1 (343 aa).

Positions 1–18 are cleaved as a signal peptide; that stretch reads MMFLLPFLTVFLAKQSHT. The alpha-1 stretch occupies residues 19-105; that stretch reads RTHSLRYFRL…RHLQRHYNHS (87 aa). An antigen-binding cleft region spans residues 19–197; sequence RTHSLRYFRL…EYGSDALERT (179 aa). Topologically, residues 19 to 298 are extracellular; sequence RTHSLRYFRL…QESGNTLLVA (280 aa). 8-(9H-purin-6-yl)-2-oxa-8-azabicyclo[3.3.1]nona-3,6-diene-4,6-dicarbaldehyde is bound by residues Y25 and R27. Positions 27, 42, and 61 each coordinate 5-(2-oxoethylideneamino)-6-(D-ribitylamino)uracil. 3 residues coordinate 5-(2-oxopropylideneamino)-6-(D-ribitylamino)uracil: R27, S42, and K61. 7-hydroxy-6-methyl-8-(1-D-ribityl)lumazine-binding residues include R27, S42, and K61. 8-(9H-purin-6-yl)-2-oxa-8-azabicyclo[3.3.1]nona-3,6-diene-4,6-dicarbaldehyde is bound by residues K61 and H76. A 2-amino-4-oxopteridine-6-carbaldehyde-binding site is contributed by K61. K61 provides a ligand contact to pyridoxal. N103 carries an N-linked (GlcNAc...) asparagine glycan. The tract at residues 106-197 is alpha-2; that stretch reads GLHTYQRMIG…EYGSDALERT (92 aa). R112 is an 8-(9H-purin-6-yl)-2-oxa-8-azabicyclo[3.3.1]nona-3,6-diene-4,6-dicarbaldehyde binding site. 5-(2-oxoethylideneamino)-6-(D-ribitylamino)uracil contacts are provided by R112, Y170, and Q171. Positions 112, 170, and 171 each coordinate 5-(2-oxopropylideneamino)-6-(D-ribitylamino)uracil. The 7-hydroxy-6-methyl-8-(1-D-ribityl)lumazine site is built by R112, Y170, and Q171. 2 cysteine pairs are disulfide-bonded: C116/C179 and C218/C274. Residues 198-289 are alpha-3; it reads EHPVVRTTRK…GLQMVLEAPQ (92 aa). One can recognise an Ig-like C1-type domain in the interval 200-302; that stretch reads PVVRTTRKET…NTLLVANTIS (103 aa). The tract at residues 290-298 is connecting peptide; the sequence is ESGNTLLVA. Residues 299 to 319 form a helical membrane-spanning segment; it reads NTISGTIILIIVLAGVGALIW. Topologically, residues 320-343 are cytoplasmic; the sequence is RRRSREPKEVMYQPTQVNEGSSPS.

As to quaternary structure, heterotrimer that consists of MR1, B2M and metabolite antigen. Major classes of metabolite ligands presented by MR1 include riboflavin-related antigens, pyrimidines and ribityl lumazines, nucleobase adducts and folate derivatives. Forms reversible covalent Schiff base complexes with microbial pyrimidine-based metabolite, which serves as a molecular switch triggering complete folding, stable association with B2M and translocation of the ternary complex from endoplasmic reticulum to the plasma membrane. Alternatively, forms non-Schiff base complexes with ribityl lumazines. On antigen-presenting cells, the ternary complex interacts with TCR on MR1-restricted T cells. Interacts with TAPBP and TAPBPL chaperones in the endoplasmic reticulum. TAPBP associated or not with MHC class I peptide loading complex binds ligand-free MR1 or MR1-B2M complex, providing for stable MR1 pools ready for metabolite antigen processing. TAPBPL interacts with MR1 in a ligand-independent way; this interaction may stabilize MR1 pool and facilitate ligand loading and dissociation. Structurally, MR1-B2M heterodimer adopts a topology similar to classical MHC class I molecules, with alpha-1 and alpha-2 domains of MR1 forming the antigen-binding cleft composed of two alpha-helices resting on a floor of 7-stranded anti-parallel beta-pleated sheet. MR1-B2M heterodimer (via alpha-helices) interacts with TCR (via CDR domains). In terms of processing, N-glycosylated. As to expression, expressed in kidney, liver, testis, spleen, thymus, brain, and heart.

It is found in the cell membrane. It localises to the endoplasmic reticulum membrane. The protein resides in the golgi apparatus membrane. Its subcellular location is the early endosome membrane. The protein localises to the late endosome membrane. In terms of biological role, antigen-presenting molecule specialized in displaying microbial pyrimidine-based metabolites to alpha-beta T cell receptors (TCR) on innate-type mucosal-associated invariant T (MAIT) cells. In complex with B2M preferentially presents riboflavin-derived metabolites to semi-invariant TCRs on MAIT cells, guiding immune surveillance of the microbial metabolome at mucosal epithelial barriers. Signature pyrimidine-based microbial antigens are generated via non-enzymatic condensation of metabolite intermediates of the riboflavin pathway with by-products arising from other metabolic pathways such as glycolysis. Typical potent antigenic metabolites are 5-(2-oxoethylideneamino)-6-D-ribitylaminouracil (5-OE-RU) and 5-(2-oxopropylideneamino)-6-D-ribitylaminouracil (5-OP-RU), products of condensation of 5-amino-6-D-ribityaminouracil (5-A-RU) with glyoxal or methylglyoxal by-products, respectively. May present microbial antigens to various MAIT cell subsets, providing for unique recognition of diverse microbes, including pathogens that do not synthesize riboflavin. Upon antigen recognition, elicits rapid innate-type MAIT cell activation to eliminate pathogenic microbes by directly killing infected cells. During T cell development, drives thymic selection and post-thymic terminal differentiation of MAIT cells in a process dependent on commensal microflora. Acts as an immune sensor of cancer cell metabolome. May present a tumor-specific or -associated metabolite essential for cancer cell survival to a pan-cancer TCR on a non-MAIT CD8-positive T cell clone, triggering T cell-mediated killing of a wide range of cancer cell types. May present tumor-enriched pyridoxal and pyridoxal 5'-phosphate antigens, enabling preferential recognition of cancer cells. Presents nucleobase carbonyl adducts generated during oxidative stress. Captures M3Ade, a nucleobase adduct composed of one adenine modified by a malondialdehyde trimer, for recognition by MR1-restricted T cell clones expressing a polyclonal TCR repertoire. In Rattus norvegicus (Rat), this protein is Major histocompatibility complex class I-related protein 1.